A 359-amino-acid polypeptide reads, in one-letter code: Isopentenyl-diphosphate delta-isomerase (359 aa).

11-12 (RK) lines the substrate pocket. FMN-binding positions include Ser-68, 69-71 (GMT), Ser-99, and Asn-127. 99 to 101 (SQR) serves as a coordination point for substrate. Substrate is bound at residue Gln-163. Glu-164 provides a ligand contact to Mg(2+). FMN-binding positions include Lys-199, Thr-229, 278-280 (GIR), and 299-300 (AL).

The protein belongs to the IPP isomerase type 2 family. In terms of assembly, homooctamer. Dimer of tetramers. FMN is required as a cofactor. The cofactor is NADPH. Mg(2+) serves as cofactor.

The protein localises to the cytoplasm. It catalyses the reaction isopentenyl diphosphate = dimethylallyl diphosphate. With respect to regulation, inhibited by 3,4-epoxy-3-methylbutyl diphosphate (EIPP). In terms of biological role, involved in the biosynthesis of isoprenoids. Catalyzes the 1,3-allylic rearrangement of the homoallylic substrate isopentenyl (IPP) to its allylic isomer, dimethylallyl diphosphate (DMAPP). The polypeptide is Isopentenyl-diphosphate delta-isomerase (Methanocaldococcus jannaschii (strain ATCC 43067 / DSM 2661 / JAL-1 / JCM 10045 / NBRC 100440) (Methanococcus jannaschii)).